The following is a 124-amino-acid chain: Urease subunit beta (124 aa).

Belongs to the urease beta subunit family. As to quaternary structure, heterotrimer of UreA (gamma), UreB (beta) and UreC (alpha) subunits. Three heterotrimers associate to form the active enzyme.

It localises to the cytoplasm. The catalysed reaction is urea + 2 H2O + H(+) = hydrogencarbonate + 2 NH4(+). It functions in the pathway nitrogen metabolism; urea degradation; CO(2) and NH(3) from urea (urease route): step 1/1. The polypeptide is Urease subunit beta (Bacillus subtilis (strain 168)).